Reading from the N-terminus, the 149-residue chain is MADQLTEEQIAEFKEAFSLFDKDGDGTITTKELGTVMRSLGQNPTEAELADMINEVDADGNGTIDFPEFLTMMARKMKDTDSEEEILEAFKVFDKDGNGFISAAELRHIMTNLGEKLTDEEVDEMIREADIDGDGQINYEEFVKMMMSK.

A2 is subject to N-acetylalanine. EF-hand domains lie at 8-43, 44-79, 81-116, and 117-149; these read EQIAEFKEAFSLFDKDGDGTITTKELGTVMRSLGQN, PTEAELADMINEVDADGNGTIDFPEFLTMMARKMKD, DSEEEILEAFKVFDKDGNGFISAAELRHIMTNLGEK, and LTDEEVDEMIREADIDGDGQINYEEFVKMMMSK. 14 residues coordinate Ca(2+): D21, D23, D25, T27, E32, D57, D59, N61, T63, E68, D94, D96, N98, and E105. Residue K116 is modified to N6,N6,N6-trimethyllysine. The Ca(2+) site is built by D130, D132, D134, Q136, and E141.

This sequence belongs to the calmodulin family.

Calmodulin mediates the control of a large number of enzymes, ion channels and other proteins by Ca(2+). Among the enzymes to be stimulated by the calmodulin-Ca(2+) complex are a number of protein kinases and phosphatases. The chain is Calmodulin (cam) from Saccharina japonica (Sweet kelp).